The primary structure comprises 236 residues: DNA repair protein RecO (236 aa).

This sequence belongs to the RecO family.

In terms of biological role, involved in DNA repair and RecF pathway recombination. The polypeptide is DNA repair protein RecO (Cellvibrio japonicus (strain Ueda107) (Pseudomonas fluorescens subsp. cellulosa)).